We begin with the raw amino-acid sequence, 332 residues long: DNA-directed RNA polymerase subunit alpha (332 aa).

The interval 2–234 is alpha N-terminal domain (alpha-NTD); that stretch reads TVTANQVLRP…DQLSVFGDFT (233 aa). Residues 248–332 form an alpha C-terminal domain (alpha-CTD) region; it reads VDPVLLRPID…AGVAQHGMLG (85 aa).

Belongs to the RNA polymerase alpha chain family. Homodimer. The RNAP catalytic core consists of 2 alpha, 1 beta, 1 beta' and 1 omega subunit. When a sigma factor is associated with the core the holoenzyme is formed, which can initiate transcription.

The enzyme catalyses RNA(n) + a ribonucleoside 5'-triphosphate = RNA(n+1) + diphosphate. DNA-dependent RNA polymerase catalyzes the transcription of DNA into RNA using the four ribonucleoside triphosphates as substrates. This chain is DNA-directed RNA polymerase subunit alpha, found in Xanthomonas axonopodis pv. citri (strain 306).